Here is a 706-residue protein sequence, read N- to C-terminus: Methionine--tRNA ligase (706 aa).

Positions 13–23 (PYANGNFHIGH) match the 'HIGH' region motif. C144, C147, C157, and C160 together coordinate Zn(2+). The 'KMSKS' region signature appears at 341–345 (KMSKS). Residue K344 coordinates ATP. Residues 600–706 (DFAKIDLRIA…PGATPGMRVR (107 aa)) enclose the tRNA-binding domain.

It belongs to the class-I aminoacyl-tRNA synthetase family. MetG type 1 subfamily. Homodimer. The cofactor is Zn(2+).

The protein resides in the cytoplasm. The enzyme catalyses tRNA(Met) + L-methionine + ATP = L-methionyl-tRNA(Met) + AMP + diphosphate. In terms of biological role, is required not only for elongation of protein synthesis but also for the initiation of all mRNA translation through initiator tRNA(fMet) aminoacylation. The sequence is that of Methionine--tRNA ligase from Paracidovorax citrulli (strain AAC00-1) (Acidovorax citrulli).